The sequence spans 450 residues: Glucose-6-phosphate isomerase (450 aa).

Residue glutamate 290 is the Proton donor of the active site. Active-site residues include histidine 311 and lysine 425.

The protein belongs to the GPI family.

It is found in the cytoplasm. The catalysed reaction is alpha-D-glucose 6-phosphate = beta-D-fructose 6-phosphate. It functions in the pathway carbohydrate biosynthesis; gluconeogenesis. The protein operates within carbohydrate degradation; glycolysis; D-glyceraldehyde 3-phosphate and glycerone phosphate from D-glucose: step 2/4. Catalyzes the reversible isomerization of glucose-6-phosphate to fructose-6-phosphate. The chain is Glucose-6-phosphate isomerase from Listeria innocua serovar 6a (strain ATCC BAA-680 / CLIP 11262).